The chain runs to 387 residues: MKSRRQNVSVARQTILGRDENFEPIPIDLVIEIFSRSPVKSIARCRCVSKLWASILRLPYFTELYLTKSCARPRLLFACQKHRELFFFSTPQPHNPNESSSPLAASFHMKIPFDGRFNIISPIGGLVFVRYEQILKGRKTPEFVSAICNPSTGQSLTLPKPKTRKRIWGTSHFGYDPIEKQFKVLSMNIGDGVYKEHYVLTLGTENLSWRRIECSIPHVHGSKGICINGVLYYRAKADMFSGTLMIVCFDVRFEKFSYIKILKPTTTLISYNGKLASLVWEGPSYICGKRFEMWVLGDPEKHEWLKHTYELRPRWQNVLGEDLLIFAGMTGTNEIVLSPKYPSHPFYVFYYNLERNTIRRVEIQGMGAFKVNEDYIFLDHVEDVKLI.

Residues 19–64 (DENFEPIPIDLVIEIFSRSPVKSIARCRCVSKLWASILRLPYFTEL) enclose the F-box domain.

Part of a SCF (ASK-cullin-F-box) protein ligase complex. Interacts with ASK14 and CUL1. As to expression, strongly expressed in guard cells. Mostly represented in seedlings, leaves and flowers, and, to a lower extent, in roots and siliques.

It participates in protein modification; protein ubiquitination. Its function is as follows. Component of SCF(ASK-cullin-F-box) E3 ubiquitin ligase complexes, which may mediate the ubiquitination and subsequent proteasomal degradation of target proteins. Negative regulator of guard cell abscisic acid (ABA) signaling, especially during drought stress. This is F-box protein DOR (DOR) from Arabidopsis thaliana (Mouse-ear cress).